The sequence spans 52 residues: MNWVPSMRKLSDELLIESYFKATEMNLNRDFIELIENEIKRRSLGHIISVSS.

Forms a stable heterotetramer with KinA (comprising two molecules of each protein), by binding to the KinA dimerization/phosphotransfer domain.

In terms of biological role, mediates a developmental checkpoint inhibiting initiation of sporulation (by preventing phosphorylation of spo0A) in response to defects in the replication initiation machinery. Inhibits autophosphorylation of the histidine protein kinase KinA, forming a molecular barricade that prevents productive interaction between the ATP-binding site in the catalytic domain and the phosphorylatable His in the phosphotransfer domain of KinA. Probably also inhibits the activity of KinB, but has relatively little effect on KinC. Has at least one target in vivo in addition to KinA as sda does not require KinA to inhibit sporulation. In Bacillus subtilis (strain 168), this protein is Sporulation inhibitor sda (sda).